Here is a 199-residue protein sequence, read N- to C-terminus: MAKVLVLYYSAYGHIEQMAEAAAAGAREAGATVDIKRVPDLVPEEVAKSAHFKLDQKAPIATVAELAEYDAIIVGVGTRFGRMASQMANFLDQAGGLWARGALNGKVGGAFTSTATQHGGQEVTLFSIITNLMHFGMVIVGLDYGYGAQMTLDEVTGGSPYGATTITGGDGSRQPSAIELDGARYQGRKIAETAIKLHG.

A Flavodoxin-like domain is found at 4–190 (VLVLYYSAYG…DGARYQGRKI (187 aa)). FMN-binding positions include 10 to 15 (SAYGHI) and 78 to 80 (TRF). Tyr12 contacts NAD(+). Position 98 (Trp98) interacts with substrate. FMN contacts are provided by residues 113 to 119 (STATQHG) and His134.

The protein belongs to the WrbA family. It depends on FMN as a cofactor.

It catalyses the reaction a quinone + NADH + H(+) = a quinol + NAD(+). The enzyme catalyses a quinone + NADPH + H(+) = a quinol + NADP(+). This chain is NAD(P)H dehydrogenase (quinone), found in Xanthobacter autotrophicus (strain ATCC BAA-1158 / Py2).